Here is a 297-residue protein sequence, read N- to C-terminus: 4-hydroxy-tetrahydrodipicolinate synthase (297 aa).

Thr50 is a pyruvate binding site. Tyr138 acts as the Proton donor/acceptor in catalysis. Lys166 functions as the Schiff-base intermediate with substrate in the catalytic mechanism. Ile208 lines the pyruvate pocket.

This sequence belongs to the DapA family. As to quaternary structure, homotetramer; dimer of dimers.

The protein resides in the cytoplasm. It carries out the reaction L-aspartate 4-semialdehyde + pyruvate = (2S,4S)-4-hydroxy-2,3,4,5-tetrahydrodipicolinate + H2O + H(+). It participates in amino-acid biosynthesis; L-lysine biosynthesis via DAP pathway; (S)-tetrahydrodipicolinate from L-aspartate: step 3/4. Functionally, catalyzes the condensation of (S)-aspartate-beta-semialdehyde [(S)-ASA] and pyruvate to 4-hydroxy-tetrahydrodipicolinate (HTPA). The protein is 4-hydroxy-tetrahydrodipicolinate synthase of Gluconobacter oxydans (strain 621H) (Gluconobacter suboxydans).